The chain runs to 257 residues: 1-acyl-sn-glycerol-3-phosphate acyltransferase (257 aa).

Residues 10–30 (VLFYLLLSASAFVWGTLSFFI) form a helical membrane-spanning segment. The short motif at 82–87 (HQSTWE) is the HXXXXD motif element. A helical membrane pass occupies residues 105-125 (ELLYVPFFGWALALLKPIAID).

This sequence belongs to the 1-acyl-sn-glycerol-3-phosphate acyltransferase family.

Its subcellular location is the cell inner membrane. The enzyme catalyses a 1-acyl-sn-glycero-3-phosphate + an acyl-CoA = a 1,2-diacyl-sn-glycero-3-phosphate + CoA. The protein operates within phospholipid metabolism; CDP-diacylglycerol biosynthesis; CDP-diacylglycerol from sn-glycerol 3-phosphate: step 2/3. Functionally, converts lysophosphatidic acid (LPA) into phosphatidic acid by incorporating acyl moiety at the 2 position. In Pseudomonas aeruginosa (strain ATCC 15692 / DSM 22644 / CIP 104116 / JCM 14847 / LMG 12228 / 1C / PRS 101 / PAO1), this protein is 1-acyl-sn-glycerol-3-phosphate acyltransferase.